Consider the following 117-residue polypeptide: Glycine cleavage system H-like protein (117 aa).

Residues 21–103 (IVKLGLSSQM…ESEGWFVVLQ (83 aa)) enclose the Lipoyl-binding domain. N6-lipoyllysine is present on Lys62.

The protein belongs to the GcvH family. Requires (R)-lipoate as cofactor.

The polypeptide is Glycine cleavage system H-like protein (Chlamydia trachomatis serovar D (strain ATCC VR-885 / DSM 19411 / UW-3/Cx)).